The primary structure comprises 219 residues: Epididymal secretory glutathione peroxidase (219 aa).

The signal sequence occupies residues 1–21 (MTVQLGAFYLFPLFMAGFVQT). The active site involves C71.

It belongs to the glutathione peroxidase family. Homotetramer. In terms of tissue distribution, proximal caput epididymis.

The protein resides in the secreted. It carries out the reaction 2 glutathione + H2O2 = glutathione disulfide + 2 H2O. In terms of biological role, may constitute a glutathione peroxidase-like protective system against peroxide damage in sperm membrane lipids. Since the purified porcine enzyme has very little activity towards hydrogen peroxide or organic hydroperoxides the protective effect is not likely to be exerted by its enzymatic activity. Instead, may protect sperm from premature acrosome reaction in the epididymis by binding to lipid peroxides, which might otherwise interact with phospholipase A2 and induce the acrosome reaction. The sequence is that of Epididymal secretory glutathione peroxidase (GPX5) from Sus scrofa (Pig).